The primary structure comprises 614 residues: DNA double-strand break repair protein Mre11 (614 aa).

Mn(2+) is bound by residues Asp-12, His-14, Asp-53, and Asn-88. His-89 acts as the Proton donor in catalysis. His-158, Asp-189, and His-191 together coordinate Mn(2+). 2 disordered regions span residues 393 to 434 (ASPI…SPDI) and 487 to 614 (ALKK…GDYL). The span at 411–425 (PVSSADSVSAVSPES) shows a compositional bias: low complexity. Basic and acidic residues-rich tracts occupy residues 487 to 502 (ALKKSYEAPDKVREAP), 535 to 558 (VPEKGGERTELEDDAVNKTEKETG), and 568 to 591 (GSEKEDADRIEKPAHVPDKAEKPV).

Belongs to the MRE11/RAD32 family. In terms of assembly, homodimer. Forms a heterotetramer composed of two Mre11 subunits and two Rad50 subunits. The cofactor is Mn(2+).

Nuclease activity is regulated by Rad50. Functionally, part of the Rad50/Mre11 complex, which is involved in the early steps of DNA double-strand break (DSB) repair. The complex may facilitate opening of the processed DNA ends to aid in the recruitment of HerA and NurA. Mre11 binds to DSB ends and has both double-stranded 3'-5' exonuclease activity and single-stranded endonuclease activity. In Methanosarcina acetivorans (strain ATCC 35395 / DSM 2834 / JCM 12185 / C2A), this protein is DNA double-strand break repair protein Mre11.